The sequence spans 41 residues: uncharacterized protein (41 aa).

Residues 8–28 traverse the membrane as a helical segment; sequence IKKIAMFFLGILVGVFIVLFF.

Its subcellular location is the membrane. This is an uncharacterized protein from Streptococcus pneumoniae serotype 2 (strain D39 / NCTC 7466).